Reading from the N-terminus, the 282-residue chain is Small-conductance mechanosensitive channel (282 aa).

At Met1–Asp23 the chain is on the periplasmic side. Residues Val24–Tyr46 traverse the membrane as a helical segment. Topologically, residues Lys47–Ser66 are cytoplasmic. Residues Leu67–Leu87 form a helical membrane-spanning segment. Over Phe88 to Asn89 the chain is Periplasmic. The helical transmembrane segment at Ile90–Ala110 threads the bilayer. Topologically, residues Gln111 to Asn282 are cytoplasmic.

This sequence belongs to the MscS (TC 1.A.23) family. In terms of assembly, homoheptamer.

The protein resides in the cell inner membrane. Mechanosensitive ion channel that participates in the regulation of osmotic pressure changes within the cell, opening in response to stretch forces in the membrane lipid bilayer, without the need for other proteins. Has high selectivity for anions, and may contribute to resistance to hypoosmotic shock. This is Small-conductance mechanosensitive channel from Caldanaerobacter subterraneus subsp. tengcongensis (strain DSM 15242 / JCM 11007 / NBRC 100824 / MB4) (Thermoanaerobacter tengcongensis).